The following is a 198-amino-acid chain: Recombination protein RecR (198 aa).

Residues 57–72 (CAQCRTLTEHSLCEYC) form a C4-type zinc finger. The 96-residue stretch at 80–175 (SLLCIVESPA…RTTRIAHGIP (96 aa)) folds into the Toprim domain.

This sequence belongs to the RecR family.

In terms of biological role, may play a role in DNA repair. It seems to be involved in an RecBC-independent recombinational process of DNA repair. It may act with RecF and RecO. In Methylococcus capsulatus (strain ATCC 33009 / NCIMB 11132 / Bath), this protein is Recombination protein RecR.